A 252-amino-acid chain; its full sequence is ATP synthase subunit a (252 aa).

6 helical membrane passes run 29–49, 87–107, 117–137, 146–166, 196–216, and 219–239; these read FTNV…FLFI, FFPL…IGLF, IMIT…CGFY, LFVP…IEVI, FIVS…LPLI, and VAIT…FTVL.

The protein belongs to the ATPase A chain family. As to quaternary structure, F-type ATPases have 2 components, CF(1) - the catalytic core - and CF(0) - the membrane proton channel. CF(1) has five subunits: alpha(3), beta(3), gamma(1), delta(1), epsilon(1). CF(0) has three main subunits: a(1), b(2) and c(9-12). The alpha and beta chains form an alternating ring which encloses part of the gamma chain. CF(1) is attached to CF(0) by a central stalk formed by the gamma and epsilon chains, while a peripheral stalk is formed by the delta and b chains.

Its subcellular location is the cell inner membrane. Functionally, key component of the proton channel; it plays a direct role in the translocation of protons across the membrane. The polypeptide is ATP synthase subunit a (Bartonella bacilliformis (strain ATCC 35685 / KC583 / Herrer 020/F12,63)).